A 41-amino-acid polypeptide reads, in one-letter code: Large ribosomal subunit protein bL32c (41 aa).

Belongs to the bacterial ribosomal protein bL32 family.

Its subcellular location is the plastid. This is Large ribosomal subunit protein bL32c (rpl32) from Helicosporidium sp. subsp. Simulium jonesii (Green alga).